Here is a 205-residue protein sequence, read N- to C-terminus: Adenylyl-sulfate kinase (205 aa).

31 to 38 contributes to the ATP binding site; it reads GLSGAGKS. Ser-105 (phosphoserine intermediate) is an active-site residue.

This sequence belongs to the APS kinase family.

It carries out the reaction adenosine 5'-phosphosulfate + ATP = 3'-phosphoadenylyl sulfate + ADP + H(+). It functions in the pathway sulfur metabolism; hydrogen sulfide biosynthesis; sulfite from sulfate: step 2/3. Catalyzes the synthesis of activated sulfate. This is Adenylyl-sulfate kinase from Shewanella sp. (strain MR-4).